Reading from the N-terminus, the 150-residue chain is Protein Smg homolog (150 aa).

This sequence belongs to the Smg family.

In Methylibium petroleiphilum (strain ATCC BAA-1232 / LMG 22953 / PM1), this protein is Protein Smg homolog.